The sequence spans 687 residues: FAD-dependent oxidoreductase domain-containing protein 2 (687 aa).

A signal peptide spans 1–22 (MSVIQLVFRLLCVLDLLLAVSA). Residues asparagine 29 and asparagine 305 are each glycosylated (N-linked (GlcNAc...) asparagine).

The protein belongs to the FOXRED2 family. FAD is required as a cofactor. Post-translationally, N-glycosylated.

The protein localises to the endoplasmic reticulum lumen. In terms of biological role, probable flavoprotein which may function in endoplasmic reticulum associated degradation (ERAD). May bind non-native proteins in the endoplasmic reticulum and target them to the ubiquitination machinery for subsequent degradation. The polypeptide is FAD-dependent oxidoreductase domain-containing protein 2 (foxred2) (Danio rerio (Zebrafish)).